The sequence spans 524 residues: Bifunctional purine biosynthesis protein PurH (524 aa).

One can recognise an MGS-like domain in the interval 1 to 145; sequence MIQQALLSVS…KNHRDVTVIV (145 aa).

It belongs to the PurH family.

It carries out the reaction (6R)-10-formyltetrahydrofolate + 5-amino-1-(5-phospho-beta-D-ribosyl)imidazole-4-carboxamide = 5-formamido-1-(5-phospho-D-ribosyl)imidazole-4-carboxamide + (6S)-5,6,7,8-tetrahydrofolate. It catalyses the reaction IMP + H2O = 5-formamido-1-(5-phospho-D-ribosyl)imidazole-4-carboxamide. It participates in purine metabolism; IMP biosynthesis via de novo pathway; 5-formamido-1-(5-phospho-D-ribosyl)imidazole-4-carboxamide from 5-amino-1-(5-phospho-D-ribosyl)imidazole-4-carboxamide (10-formyl THF route): step 1/1. Its pathway is purine metabolism; IMP biosynthesis via de novo pathway; IMP from 5-formamido-1-(5-phospho-D-ribosyl)imidazole-4-carboxamide: step 1/1. This chain is Bifunctional purine biosynthesis protein PurH, found in Ralstonia nicotianae (strain ATCC BAA-1114 / GMI1000) (Ralstonia solanacearum).